The following is a 569-amino-acid chain: Peroxisomal targeting signal receptor (569 aa).

Cys-5 participates in a covalent cross-link: Glycyl cysteine thioester (Cys-Gly) (interchain with G-Cter in ubiquitin). Residues 6–28 (SVGANPLAQLNKRVQQDRTLQHG) are amphipathic helix 1 (AH1). Residue Lys-17 forms a Glycyl lysine isopeptide (Lys-Gly) (interchain with G-Cter in ubiquitin) linkage. Residues 53–71 (KFQMEQFMAGKASSGGNMF) are amphipathic helix 2 (AH2). Residues 112-116 (WSQEF) carry the WxxxF/Y motif 1 motif. The interval 150-154 (PMNMM) is amphipathic helix 3 (AH3). Residues 181 to 185 (WEQQF) carry the WxxxF/Y motif 2 motif. The interval 229–245 (FQQIWNDIHDQTDDLDS) is amphipathic helix 4 (AH4). TPR repeat units follow at residues 281–315 (NTDA…DPGH), 316–349 (VDAW…DPHN), 417–450 (PDVQ…RPDD), 452–484 (CMWN…KPTF), and 486–518 (RARY…HEVE).

Belongs to the peroxisomal targeting signal receptor family. As to quaternary structure, interacts (via WxxxF/Y and LVxEF motifs) with PEX14; promoting translocation through the PEX13-PEX14 docking complex. In terms of processing, monoubiquitinated at Cys-5 by PEX2 during PEX5 passage through the retrotranslocation channel: monoubiquitination acts as a signal for PEX5 extraction and is required for proper export from peroxisomes and recycling. When PEX5 recycling is compromised, polyubiquitinated at Lys-17 by PEX10 during its passage through the retrotranslocation channel, leading to its degradation.

The protein resides in the cytoplasm. It localises to the cytosol. Its subcellular location is the peroxisome matrix. In terms of biological role, receptor that mediates peroxisomal import of proteins containing a C-terminal PTS1-type tripeptide peroxisomal targeting signal (SKL-type). Binds to cargo proteins containing a PTS1 peroxisomal targeting signal in the cytosol, and translocates them into the peroxisome matrix by passing through the PEX13-PEX14 docking complex along with cargo proteins. PEX5 receptor is then retrotranslocated into the cytosol, leading to release of bound cargo in the peroxisome matrix, and reset for a subsequent peroxisome import cycle. In Eremothecium gossypii (strain ATCC 10895 / CBS 109.51 / FGSC 9923 / NRRL Y-1056) (Yeast), this protein is Peroxisomal targeting signal receptor (PEX5).